The following is a 123-amino-acid chain: MVVNIYDTANELSRQLRETQEYQGLQKAFEALKADGDTFDTFKKFQQAQADAQHKQMTGQQPTDDEIKNIQNLAKEVSGKKVVQDLMNQERQVDSMLQQLNKTITSPIQDLYSEVMPKMPGQE.

It belongs to the UPF0342 family.

This is UPF0342 protein LAR_1202 from Limosilactobacillus reuteri subsp. reuteri (strain JCM 1112) (Lactobacillus reuteri).